The primary structure comprises 320 residues: Cytochrome f (320 aa).

Residues 1-35 (MQTRNTLSWIKEEITRSISVSLMIYIITWASISNA) form the signal peptide. 4 residues coordinate heme: Tyr-36, Cys-56, Cys-59, and His-60. Residues 286–306 (VQGLLFFLASVVLAQIFLVLK) form a helical membrane-spanning segment.

This sequence belongs to the cytochrome f family. The 4 large subunits of the cytochrome b6-f complex are cytochrome b6, subunit IV (17 kDa polypeptide, petD), cytochrome f and the Rieske protein, while the 4 small subunits are PetG, PetL, PetM and PetN. The complex functions as a dimer. Heme is required as a cofactor.

The protein resides in the plastid. Its subcellular location is the chloroplast thylakoid membrane. Its function is as follows. Component of the cytochrome b6-f complex, which mediates electron transfer between photosystem II (PSII) and photosystem I (PSI), cyclic electron flow around PSI, and state transitions. This is Cytochrome f from Carica papaya (Papaya).